Here is a 354-residue protein sequence, read N- to C-terminus: Ferrochelatase (354 aa).

Residues His214 and Glu295 each coordinate Fe cation.

It belongs to the ferrochelatase family.

Its subcellular location is the cytoplasm. The enzyme catalyses heme b + 2 H(+) = protoporphyrin IX + Fe(2+). It participates in porphyrin-containing compound metabolism; protoheme biosynthesis; protoheme from protoporphyrin-IX: step 1/1. In terms of biological role, catalyzes the ferrous insertion into protoporphyrin IX. The sequence is that of Ferrochelatase from Burkholderia ambifaria (strain MC40-6).